A 108-amino-acid polypeptide reads, in one-letter code: uncharacterized protein (108 aa).

This is an uncharacterized protein from Bacillus subtilis (strain 168).